Reading from the N-terminus, the 307-residue chain is Ornithine carbamoyltransferase (307 aa).

Carbamoyl phosphate-binding positions include 50–53 (STRT), glutamine 77, arginine 101, and 128–131 (HPCQ). L-ornithine contacts are provided by residues asparagine 160, aspartate 224, and 228–229 (SM). Residues 264–265 (CL) and arginine 292 each bind carbamoyl phosphate.

The protein belongs to the aspartate/ornithine carbamoyltransferase superfamily. OTCase family.

It localises to the cytoplasm. The catalysed reaction is carbamoyl phosphate + L-ornithine = L-citrulline + phosphate + H(+). It participates in amino-acid biosynthesis; L-arginine biosynthesis; L-arginine from L-ornithine and carbamoyl phosphate: step 1/3. Functionally, reversibly catalyzes the transfer of the carbamoyl group from carbamoyl phosphate (CP) to the N(epsilon) atom of ornithine (ORN) to produce L-citrulline. The protein is Ornithine carbamoyltransferase of Clavibacter sepedonicus (Clavibacter michiganensis subsp. sepedonicus).